Reading from the N-terminus, the 318-residue chain is Cell growth regulator with EF hand domain protein 1 (318 aa).

Positions 1–19 (MLPLTMTVLILLLLPTGQA) are cleaved as a signal peptide. EF-hand domains are found at residues 69–104 (SREQVLLYLFALHDYDQSGQLDGLELLSMLTAALAP) and 114–149 (PVILIVDKVLETQDLNGDGLMTPAELINFPGVALRH). Aspartate 82, aspartate 84, serine 86, glutamine 88, glutamate 93, aspartate 127, asparagine 129, aspartate 131, and glutamate 138 together coordinate Ca(2+). Residues 177–318 (LRQETQEAPG…HIVQVENDEI (142 aa)) are disordered. 2 stretches are compositionally biased toward basic and acidic residues: residues 186-202 (GPREEAKGQVEARRESL) and 223-233 (GEAEGQAEAKG). 3 repeat units span residues 219–235 (PGPRGEAEGQAEAKGDA), 236–252 (PGPRGEAGGQAEAEGDA), and 253–269 (PGPRGEAGGQAEAEGDA). Positions 219-286 (PGPRGEAEGQ…GGQAEARENG (68 aa)) are 4 X 17 AA approximate tandem repeats of P-G-P-R-G-E-A-G-G-Q-A-E-A-[KR]-G-D-A. The segment covering 235 to 272 (APGPRGEAGGQAEAEGDAPGPRGEAGGQAEAEGDAPGP) has biased composition (low complexity). The stretch at 270–286 (PGPRGEAGGQAEARENG) is one 4; approximate repeat. The span at 281–293 (EARENGEEAKELP) shows a compositional bias: basic and acidic residues.

Post-translationally, probably digested extracellularly by an unknown serine protease generating extremely hydrophobic bioactive peptides.

Its subcellular location is the secreted. Mediates cell-cell adhesion in a calcium-dependent manner. Able to inhibit growth in several cell lines. In Homo sapiens (Human), this protein is Cell growth regulator with EF hand domain protein 1.